A 90-amino-acid chain; its full sequence is Barrier-to-autointegration factor-like protein (90 aa).

This sequence belongs to the BAF family. Homodimer. Heterodimerizes with BANF1.

The protein resides in the nucleus. It localises to the cytoplasm. In terms of biological role, may play a role in BANF1 regulation and influence tissue-specific roles of BANF1. The chain is Barrier-to-autointegration factor-like protein (BANF2) from Bos taurus (Bovine).